Consider the following 593-residue polypeptide: ABC transporter F family member 2 (593 aa).

Basic residues predominate over residues 1-10 (MAKKGGKNNK). Residues 1–25 (MAKKGGKNNKSKKEVTPPTSDVEDE) form a disordered region. 2 ABC transporter domains span residues 53–294 (VKIE…VNQM) and 364–583 (MHFD…RDLT). ATP-binding positions include 85-92 (GQNGCGKS) and 399-406 (GPNGAGKS).

This sequence belongs to the ABC transporter superfamily. ABCF family. EF3 subfamily.

This is ABC transporter F family member 2 (abcF2) from Dictyostelium discoideum (Social amoeba).